The chain runs to 146 residues: VHLSGGEKSAVTNLWGKVNINELGGEALGRLLVVYPWTQRFFEAFGDLSSAGAVMGNPKVKAHGAKVLTSFGDALKNLDDLKGTFAKLSELHCDKLHVDPENFNRLGNVLIVVLARHFSKDFSPEVQAAWQKLVSGVAHALGHKYH.

V1 carries the post-translational modification N-acetylvaline. Residues 2–146 form the Globin domain; the sequence is HLSGGEKSAV…VAHALGHKYH (145 aa). T12 is modified (phosphothreonine). Position 59 is an N6-acetyllysine (K59). Position 63 (H63) interacts with heme b. K82 is modified (N6-acetyllysine). H92 is a heme b binding site. C93 bears the S-nitrosocysteine mark. K144 is modified (N6-acetyllysine).

The protein belongs to the globin family. As to quaternary structure, heterotetramer of two alpha chains and two beta chains. As to expression, red blood cells.

Its function is as follows. Involved in oxygen transport from the lung to the various peripheral tissues. The protein is Hemoglobin subunit beta (HBB) of Ornithorhynchus anatinus (Duckbill platypus).